A 109-amino-acid chain; its full sequence is DNA-binding protein MJ0691 (109 aa).

Belongs to the PDCD5 family.

This is DNA-binding protein MJ0691 from Methanocaldococcus jannaschii (strain ATCC 43067 / DSM 2661 / JAL-1 / JCM 10045 / NBRC 100440) (Methanococcus jannaschii).